A 398-amino-acid polypeptide reads, in one-letter code: Cathepsin D (398 aa).

Residues 1-20 form the signal peptide; that stretch reads MAPRGLLVLLLLALVGPCAA. Residues 21-63 constitute a propeptide, activation peptide; it reads LIRIPLTKFTSTRRMLTEVGSEIPDMNAITQFLKFKLGFADLA. The Peptidase A1 domain maps to 78–395; it reads YYGEIGIGTP…DRDNDSVGFA (318 aa). Aspartate 96 is a catalytic residue. Cysteine 109 and cysteine 116 form a disulfide bridge. Asparagine 133 and asparagine 251 each carry an N-linked (GlcNAc...) asparagine glycan. A disulfide bond links cysteine 274 and cysteine 278. The active site involves aspartate 283. Cysteine 317 and cysteine 354 are disulfide-bonded.

Belongs to the peptidase A1 family. Consists of a light chain and a heavy chain. In terms of tissue distribution, oocytic yolk, preovulatory follicles, liver.

It is found in the lysosome. The catalysed reaction is Specificity similar to, but narrower than, that of pepsin A. Does not cleave the 4-Gln-|-His-5 bond in B chain of insulin.. Its function is as follows. Acid protease active in intracellular protein breakdown. In chicken it is a key enzyme for yolk formation as it is capable of catalyzing intra oocytic break down of protein components of both vitellogenin and VLDL. This chain is Cathepsin D (CTSD), found in Gallus gallus (Chicken).